A 1012-amino-acid polypeptide reads, in one-letter code: F-box DNA helicase 1 (1012 aa).

The interval 1–54 (MHLTADDCEALSRSTEGLSSLTQPLNQRRSRGDVNRGLQPTHRTRTQPGAQGRQ) is disordered. The span at 12–27 (SRSTEGLSSLTQPLNQ) shows a compositional bias: polar residues. Residues 185–234 (QGSIEDLPDEVLRSIFAFLPVTDLYQSLSLVCRRWRIIVGDPWFIPWKKL) enclose the F-box domain. The UvrD-like helicase ATP-binding domain occupies 427–692 (THEQQRILNH…YYLTQSFRFG (266 aa)). An ATP-binding site is contributed by 448-455 (AFAGTGKT).

Belongs to the helicase family. UvrD subfamily. As to quaternary structure, part of the SCF (SKP1-CUL1-F-box) E3 ubiquitin-protein ligase complex SCF(FBH1).

The protein localises to the nucleus. It is found in the chromosome. It carries out the reaction Couples ATP hydrolysis with the unwinding of duplex DNA by translocating in the 3'-5' direction.. The catalysed reaction is ATP + H2O = ADP + phosphate + H(+). The protein operates within protein modification; protein ubiquitination. Functionally, 3'-5' DNA helicase and substrate-recognition component of the SCF(FBH1) E3 ubiquitin ligase complex that plays a key role in response to stalled/damaged replication forks. Involved in genome maintenance by acting as an anti-recombinogenic helicase and preventing extensive strand exchange during homologous recombination: promotes RAD51 filament dissolution from stalled forks, thereby inhibiting homologous recombination and preventing excessive recombination. Also promotes cell death and DNA double-strand breakage in response to replication stress: promotes the endonucleolytic DNA cleavage following prolonged replication stress via its helicase activity, possibly to eliminate cells with excessive replication stress. The protein is F-box DNA helicase 1 of Gallus gallus (Chicken).